A 251-amino-acid polypeptide reads, in one-letter code: MIPNIIHQIWIQGYESIPSELRKYHENCLKINYGFKNEFWDNDRIRNFLKNNFEPEYLELYDKYKIYAQKADFARYAILKIHGGIYLDMDMVCRKNLGDFLGLGFFFTAYKLKNVFTNYLNGVIGSRPNHPVFDYIFKNMFLRQNDASNVTNSTGTKLFRDSITEYTKNNPTNDISLIDSKYLHPCNLYNDKNCPYTCTDCYIAHTNYSSWAPHLKLCKIFFENKYLIFIIIIIIFIILILLWIKYKFNKS.

Residues Asn-149, Asn-152, and Asn-207 are each glycosylated (N-linked (GlcNAc...) asparagine; by host). A helical transmembrane segment spans residues 226-246 (YLIFIIIIIIFIILILLWIKY).

Belongs to the glycosyltransferase 32 family.

It is found in the membrane. This is an uncharacterized protein from Acanthamoeba polyphaga (Amoeba).